The sequence spans 116 residues: Omega-ctenitoxin-Pn3a (116 aa).

The first 19 residues, M1 to G19, serve as a signal peptide directing secretion. A propeptide spanning residues F20–E38 is cleaved from the precursor. Disulfide bonds link C41/C58, C48/C64, C55/C90, C57/C78, C66/C76, C96/C102, and C106/C111. At H115 the chain carries Histidine amide.

It belongs to the neurotoxin 04 (omega-agtx) family. 03 (type II/III omega-agtx) subfamily. As to expression, expressed by the venom gland.

It is found in the secreted. This toxin is a potent and practically irreversible antagonist of both Cav2.1/CACNA1A and Cav2.2/CACNA1B calcium channels, while it displays a partial and rapidly reversible block of Cav2.3/CACNA1E calcium channels and no effect on Cav3/CACNA1 calcium channels. Inhibits glutamate uptake from rat brain synaptosomes by an interaction between cysteines from both glutamate transporter and toxin. Blocks potassium-induced exocytosis of synaptic vesicles in brain cortical synaptosomes (IC(50)=1.1 nM). In rat brain, inhibits glutamate release, neuronal death and loss of neurotransmission in the hippocampus resulting from ischemia. In vivo, induces rapid general flaccid paralysis followed by death in 10-30 minutes at dose levels of 5 ug per mouse. In Phoneutria nigriventer (Brazilian armed spider), this protein is Omega-ctenitoxin-Pn3a.